The primary structure comprises 600 residues: Aspartate--tRNA(Asp/Asn) ligase (600 aa).

Glu-174 is an L-aspartate binding site. The aspartate stretch occupies residues 198-201 (QLFK). Arg-220 contributes to the L-aspartate binding site. ATP is bound by residues 220–222 (RDE) and Gln-229. His-457 serves as a coordination point for L-aspartate. ATP is bound at residue Glu-491. Arg-498 serves as a coordination point for L-aspartate. 543–546 (GLDR) lines the ATP pocket.

This sequence belongs to the class-II aminoacyl-tRNA synthetase family. Type 1 subfamily. In terms of assembly, homodimer.

It localises to the cytoplasm. It catalyses the reaction tRNA(Asx) + L-aspartate + ATP = L-aspartyl-tRNA(Asx) + AMP + diphosphate. Aspartyl-tRNA synthetase with relaxed tRNA specificity since it is able to aspartylate not only its cognate tRNA(Asp) but also tRNA(Asn). Reaction proceeds in two steps: L-aspartate is first activated by ATP to form Asp-AMP and then transferred to the acceptor end of tRNA(Asp/Asn). This chain is Aspartate--tRNA(Asp/Asn) ligase, found in Burkholderia orbicola (strain AU 1054).